We begin with the raw amino-acid sequence, 157 residues long: F-box protein SNE (157 aa).

The F-box domain occupies 24–70 (PVFSINDHHDVLVEILRRLDGSSLCSAACVCRLWSAVARNDSIWEEL).

As to quaternary structure, part of a SCF (ASK-cullin-F-box) protein ligase complex. Interacts directly with SKP1A and SKP1B. Highly expressed in flowers and at much lower level in seedlings, rosette leaves and green siliques.

It localises to the nucleus. It functions in the pathway protein modification; protein ubiquitination. Its function is as follows. Essential component of a SCF-type E3 ligase complex that positively regulates the gibberellin signaling pathway. Upon gibberellin treatment, such complex probably mediates the ubiquitination and subsequent degradation of DELLA proteins (GAI, RGA and RGL2), some repressors of the gibberellin pathway, leading to activate the pathway. Can partially complement the absence of GID2/SLY1. This is F-box protein SNE (SNE) from Arabidopsis thaliana (Mouse-ear cress).